The primary structure comprises 69 residues: Regulatory protein MokC (69 aa).

A helical transmembrane segment spans residues 24–44; sequence KAMIVALIVICITAVVAALVT.

The protein belongs to the Hok/Gef family.

It localises to the cell inner membrane. Might be the toxic component of a type I toxin-antitoxin (TA) system. Regulatory peptide which completely overlaps hokC and enables hokC expression. In Escherichia coli (strain K12), this protein is Regulatory protein MokC (mokC).